The following is a 144-amino-acid chain: Nucleoside diphosphate kinase (144 aa).

Positions 9, 57, 85, 91, 102, and 112 each coordinate ATP. The active-site Pros-phosphohistidine intermediate is histidine 115.

It belongs to the NDK family. Homotetramer. Mg(2+) is required as a cofactor.

Its subcellular location is the cytoplasm. The catalysed reaction is a 2'-deoxyribonucleoside 5'-diphosphate + ATP = a 2'-deoxyribonucleoside 5'-triphosphate + ADP. It catalyses the reaction a ribonucleoside 5'-diphosphate + ATP = a ribonucleoside 5'-triphosphate + ADP. Major role in the synthesis of nucleoside triphosphates other than ATP. The ATP gamma phosphate is transferred to the NDP beta phosphate via a ping-pong mechanism, using a phosphorylated active-site intermediate. This chain is Nucleoside diphosphate kinase, found in Chlamydia pneumoniae (Chlamydophila pneumoniae).